The following is a 426-amino-acid chain: Tyrosine--tRNA ligase (426 aa).

Residue tyrosine 35 participates in L-tyrosine binding. The short motif at 40–49 is the 'HIGH' region element; that stretch reads PTADSLHIGH. L-tyrosine-binding residues include tyrosine 172 and glutamine 176. The short motif at 232–236 is the 'KMSKS' region element; that stretch reads KLGKS. Lysine 235 provides a ligand contact to ATP. The region spanning 357-414 is the S4 RNA-binding domain; it reads ENIKDILVNSKLSKSKNNAKSVILSSSIRINNKKQKSIDFMFKKEDKLFNLFTLIKKG.

It belongs to the class-I aminoacyl-tRNA synthetase family. TyrS type 1 subfamily. As to quaternary structure, homodimer.

It localises to the cytoplasm. The catalysed reaction is tRNA(Tyr) + L-tyrosine + ATP = L-tyrosyl-tRNA(Tyr) + AMP + diphosphate + H(+). Functionally, catalyzes the attachment of tyrosine to tRNA(Tyr) in a two-step reaction: tyrosine is first activated by ATP to form Tyr-AMP and then transferred to the acceptor end of tRNA(Tyr). The chain is Tyrosine--tRNA ligase from Wigglesworthia glossinidia brevipalpis.